Reading from the N-terminus, the 630-residue chain is Ankyrin repeat protein OPG025 (630 aa).

ANK repeat units follow at residues 36–69 (DGET…YKNI), 70–100 (NDFD…EINS), 103–134 (NGIN…PTCS), 174–210 (MGKT…EMCH), 338–367 (KHIN…VVVN), and 408–437 (HGRS…DINI).

The protein belongs to the orthopoxvirus OPG025 family. As to quaternary structure, interacts with components of host SCF complex CUL1 and SKP1 and components of the cullin deneddylation/COP9 signalosome complex subunits COPS7A and COPS7B.

Functionally, plays a role in the inhibition of host immune repsonse by counteracting the action of interferons on early events in the viral replication cycle. The polypeptide is Ankyrin repeat protein OPG025 (OPG025) (Monkeypox virus).